We begin with the raw amino-acid sequence, 503 residues long: Cobyric acid synthase (503 aa).

The 190-residue stretch at 255–444 folds into the GATase cobBQ-type domain; sequence AIDVAVIRCP…MHDLFHNDAF (190 aa). The active-site Nucleophile is C337. The active site involves H436.

Belongs to the CobB/CobQ family. CobQ subfamily.

It participates in cofactor biosynthesis; adenosylcobalamin biosynthesis. In terms of biological role, catalyzes amidations at positions B, D, E, and G on adenosylcobyrinic A,C-diamide. NH(2) groups are provided by glutamine, and one molecule of ATP is hydrogenolyzed for each amidation. In Geobacillus kaustophilus (strain HTA426), this protein is Cobyric acid synthase.